The following is a 333-amino-acid chain: Probable malate dehydrogenase 3 (333 aa).

12-18 is an NAD(+) binding site; the sequence is GAAGQIA. Residues R93 and R99 each coordinate substrate. NAD(+) is bound by residues N106, Q113, and 130 to 132; that span reads VGN. Substrate contacts are provided by N132 and R163. Catalysis depends on H188, which acts as the Proton acceptor.

The protein belongs to the LDH/MDH superfamily. MDH type 2 family. Homodimer.

It carries out the reaction (S)-malate + NAD(+) = oxaloacetate + NADH + H(+). Functionally, catalyzes the reversible oxidation of malate to oxaloacetate. The polypeptide is Probable malate dehydrogenase 3 (mdhC) (Dictyostelium discoideum (Social amoeba)).